A 199-amino-acid polypeptide reads, in one-letter code: dITP/XTP pyrophosphatase (199 aa).

8–13 provides a ligand contact to substrate; that stretch reads TSNINK. The Proton acceptor role is filled by D68. Position 68 (D68) interacts with Mg(2+). Substrate-binding positions include S69, 155–158, K177, and 182–183; these read FGYD and HR.

This sequence belongs to the HAM1 NTPase family. As to quaternary structure, homodimer. It depends on Mg(2+) as a cofactor.

The enzyme catalyses XTP + H2O = XMP + diphosphate + H(+). It carries out the reaction dITP + H2O = dIMP + diphosphate + H(+). It catalyses the reaction ITP + H2O = IMP + diphosphate + H(+). In terms of biological role, pyrophosphatase that catalyzes the hydrolysis of nucleoside triphosphates to their monophosphate derivatives, with a high preference for the non-canonical purine nucleotides XTP (xanthosine triphosphate), dITP (deoxyinosine triphosphate) and ITP. Seems to function as a house-cleaning enzyme that removes non-canonical purine nucleotides from the nucleotide pool, thus preventing their incorporation into DNA/RNA and avoiding chromosomal lesions. The sequence is that of dITP/XTP pyrophosphatase from Borrelia duttonii (strain Ly).